The following is a 139-amino-acid chain: Nucleoside diphosphate kinase (139 aa).

ATP is bound by residues Lys9, Phe57, Arg85, Thr91, Arg102, and Asn112. His115 serves as the catalytic Pros-phosphohistidine intermediate.

It belongs to the NDK family. In terms of assembly, homotetramer. The cofactor is Mg(2+).

It is found in the cytoplasm. The catalysed reaction is a 2'-deoxyribonucleoside 5'-diphosphate + ATP = a 2'-deoxyribonucleoside 5'-triphosphate + ADP. It catalyses the reaction a ribonucleoside 5'-diphosphate + ATP = a ribonucleoside 5'-triphosphate + ADP. Functionally, major role in the synthesis of nucleoside triphosphates other than ATP. The ATP gamma phosphate is transferred to the NDP beta phosphate via a ping-pong mechanism, using a phosphorylated active-site intermediate. This is Nucleoside diphosphate kinase from Exiguobacterium sp. (strain ATCC BAA-1283 / AT1b).